The sequence spans 199 residues: Ribonuclease HII (199 aa).

The RNase H type-2 domain maps to 1-199 (MCVCGIDEAG…TYKNLVQGHI (199 aa)). Asp7, Glu8, and Asp97 together coordinate a divalent metal cation.

It belongs to the RNase HII family. Mn(2+) serves as cofactor. It depends on Mg(2+) as a cofactor.

The protein resides in the cytoplasm. The catalysed reaction is Endonucleolytic cleavage to 5'-phosphomonoester.. In terms of biological role, endonuclease that specifically degrades the RNA of RNA-DNA hybrids. The protein is Ribonuclease HII of Picrophilus torridus (strain ATCC 700027 / DSM 9790 / JCM 10055 / NBRC 100828 / KAW 2/3).